A 437-amino-acid polypeptide reads, in one-letter code: Elongation factor 1-gamma (437 aa).

Alanine 2 carries the post-translational modification N-acetylalanine. Residues 2–87 (AAGTLYTYPE…YVSNEELRGS (86 aa)) enclose the GST N-terminal domain. The GST C-terminal domain occupies 88-216 (TPEAAAQVVQ…VKLCEKMAQF (129 aa)). N6-acetyllysine occurs at positions 147 and 212. Positions 221–254 (FAESQPKKDTPRKEKGSREEKQKPQAERKEEKKA) are enriched in basic and acidic residues. Positions 221 to 268 (FAESQPKKDTPRKEKGSREEKQKPQAERKEEKKAAAPAPEEEMDECEQ) are disordered. Lysine 253 participates in a covalent cross-link: Glycyl lysine isopeptide (Lys-Gly) (interchain with G-Cter in SUMO1). Positions 276–437 (AKDPFAHLPK…KAVNQGKIFK (162 aa)) constitute an EF-1-gamma C-terminal domain. Residue lysine 285 forms a Glycyl lysine isopeptide (Lys-Gly) (interchain with G-Cter in SUMO2) linkage. The residue at position 401 (lysine 401) is an N6-acetyllysine. Lysine 434 is subject to N6-acetyllysine; alternate. Lysine 434 is subject to N6-malonyllysine; alternate.

As to quaternary structure, EF-1 is composed of four subunits: alpha, beta, delta, and gamma.

Its function is as follows. Probably plays a role in anchoring the complex to other cellular components. The sequence is that of Elongation factor 1-gamma (Eef1g) from Mus musculus (Mouse).